A 371-amino-acid polypeptide reads, in one-letter code: Queuine tRNA-ribosyltransferase (371 aa).

Asp-90 (proton acceptor) is an active-site residue. Residues 90–94 (DSGGF), Asp-144, Gln-189, and Gly-215 each bind substrate. Residues 246-252 (GVGTPEN) form an RNA binding region. Catalysis depends on Asp-265, which acts as the Nucleophile. The interval 270–274 (TRNAR) is RNA binding; important for wobble base 34 recognition. Cys-303, Cys-305, Cys-308, and His-334 together coordinate Zn(2+).

This sequence belongs to the queuine tRNA-ribosyltransferase family. Homodimer. Within each dimer, one monomer is responsible for RNA recognition and catalysis, while the other monomer binds to the replacement base PreQ1. Zn(2+) serves as cofactor.

It carries out the reaction 7-aminomethyl-7-carbaguanine + guanosine(34) in tRNA = 7-aminomethyl-7-carbaguanosine(34) in tRNA + guanine. Its pathway is tRNA modification; tRNA-queuosine biosynthesis. Catalyzes the base-exchange of a guanine (G) residue with the queuine precursor 7-aminomethyl-7-deazaguanine (PreQ1) at position 34 (anticodon wobble position) in tRNAs with GU(N) anticodons (tRNA-Asp, -Asn, -His and -Tyr). Catalysis occurs through a double-displacement mechanism. The nucleophile active site attacks the C1' of nucleotide 34 to detach the guanine base from the RNA, forming a covalent enzyme-RNA intermediate. The proton acceptor active site deprotonates the incoming PreQ1, allowing a nucleophilic attack on the C1' of the ribose to form the product. After dissociation, two additional enzymatic reactions on the tRNA convert PreQ1 to queuine (Q), resulting in the hypermodified nucleoside queuosine (7-(((4,5-cis-dihydroxy-2-cyclopenten-1-yl)amino)methyl)-7-deazaguanosine). The polypeptide is Queuine tRNA-ribosyltransferase (Helicobacter pylori (strain J99 / ATCC 700824) (Campylobacter pylori J99)).